The primary structure comprises 726 residues: WD repeat-containing and planar cell polarity effector protein fritz homolog (726 aa).

WD repeat units follow at residues 305–343 and 344–383; these read LRSK…TLLA and QAEL…INIQ. The segment covering 642 to 660 has biased composition (polar residues); it reads SSGSTPKHTIQQKIPNGPS. The interval 642–717 is disordered; sequence SSGSTPKHTI…RRQDTEDVGS (76 aa). Residues 672-685 show a composition bias toward acidic residues; the sequence is MEETEEEEEEEEEA. Over residues 701–712 the composition is skewed to basic and acidic residues; that stretch reads GELREDHRRQDT.

It belongs to the WD repeat fritz family. As to quaternary structure, component of the CPLANE (ciliogenesis and planar polarity effectors) complex, composed of INTU, FUZ and WDPCP. Interacts with CPLANE1.

It is found in the cell membrane. It localises to the cytoplasm. The protein resides in the cytoskeleton. The protein localises to the cilium axoneme. Its subcellular location is the cilium basal body. Its function is as follows. Probable effector of the planar cell polarity signaling pathway which regulates the septin cytoskeleton in both ciliogenesis and collective cell movements. Together with FUZ and WDPCP proposed to function as core component of the CPLANE (ciliogenesis and planar polarity effectors) complex involved in the recruitment of peripheral IFT-A proteins to basal bodies. Binds phosphatidylinositol 3-phosphate with highest affinity, followed by phosphatidylinositol 4-phosphate and phosphatidylinositol 5-phosphate. This chain is WD repeat-containing and planar cell polarity effector protein fritz homolog (Wdpcp), found in Rattus norvegicus (Rat).